Here is a 252-residue protein sequence, read N- to C-terminus: tRNA (guanine-N(7)-)-methyltransferase (252 aa).

4 residues coordinate S-adenosyl-L-methionine: glutamate 75, glutamate 100, aspartate 127, and aspartate 150. Residue aspartate 150 is part of the active site. Lysine 154 serves as a coordination point for substrate. The segment at 156-161 is interaction with RNA; sequence RHNKRR. Residues aspartate 186 and 223–226 contribute to the substrate site; that span reads THFE.

It belongs to the class I-like SAM-binding methyltransferase superfamily. TrmB family.

The enzyme catalyses guanosine(46) in tRNA + S-adenosyl-L-methionine = N(7)-methylguanosine(46) in tRNA + S-adenosyl-L-homocysteine. It functions in the pathway tRNA modification; N(7)-methylguanine-tRNA biosynthesis. In terms of biological role, catalyzes the formation of N(7)-methylguanine at position 46 (m7G46) in tRNA. The polypeptide is tRNA (guanine-N(7)-)-methyltransferase (Xanthomonas oryzae pv. oryzae (strain MAFF 311018)).